The sequence spans 141 residues: Metallothiol transferase FosB (141 aa).

The region spanning S5–G120 is the VOC domain. Mg(2+)-binding residues include H8, H67, and E116. Catalysis depends on E116, which acts as the Proton donor/acceptor.

The protein belongs to the fosfomycin resistance protein family. FosB subfamily. Homodimer. Mg(2+) is required as a cofactor.

The protein resides in the cytoplasm. Its function is as follows. Metallothiol transferase which confers resistance to fosfomycin by catalyzing the addition of a thiol cofactor to fosfomycin. L-cysteine is probably the physiological thiol donor. The protein is Metallothiol transferase FosB of Lysinibacillus sphaericus (strain C3-41).